The primary structure comprises 239 residues: Sugar fermentation stimulation protein homolog (239 aa).

The protein belongs to the SfsA family.

The polypeptide is Sugar fermentation stimulation protein homolog (Desulforamulus reducens (strain ATCC BAA-1160 / DSM 100696 / MI-1) (Desulfotomaculum reducens)).